The primary structure comprises 196 residues: Holliday junction branch migration complex subunit RuvA (196 aa).

Residues 1-63 are domain I; that stretch reads MYDYIKGTLV…DDAHLLFGFH (63 aa). The segment at 64–142 is domain II; it reads TEDEKEVFLK…ELPAETTNTT (79 aa). Residues 143–146 are flexible linker; the sequence is ANQT. A domain III region spans residues 147-196; the sequence is AGNQQLDEAMEALLALGYKATELKKVKAFFEDTNETAEQYIKSALKMLMK.

This sequence belongs to the RuvA family. As to quaternary structure, homotetramer. Forms an RuvA(8)-RuvB(12)-Holliday junction (HJ) complex. HJ DNA is sandwiched between 2 RuvA tetramers; dsDNA enters through RuvA and exits via RuvB. An RuvB hexamer assembles on each DNA strand where it exits the tetramer. Each RuvB hexamer is contacted by two RuvA subunits (via domain III) on 2 adjacent RuvB subunits; this complex drives branch migration. In the full resolvosome a probable DNA-RuvA(4)-RuvB(12)-RuvC(2) complex forms which resolves the HJ.

The protein resides in the cytoplasm. Its function is as follows. The RuvA-RuvB-RuvC complex processes Holliday junction (HJ) DNA during genetic recombination and DNA repair, while the RuvA-RuvB complex plays an important role in the rescue of blocked DNA replication forks via replication fork reversal (RFR). RuvA specifically binds to HJ cruciform DNA, conferring on it an open structure. The RuvB hexamer acts as an ATP-dependent pump, pulling dsDNA into and through the RuvAB complex. HJ branch migration allows RuvC to scan DNA until it finds its consensus sequence, where it cleaves and resolves the cruciform DNA. The protein is Holliday junction branch migration complex subunit RuvA of Streptococcus thermophilus (strain ATCC BAA-491 / LMD-9).